The primary structure comprises 407 residues: Lysosome-associated membrane glycoprotein 1 (407 aa).

The N-terminal stretch at 1 to 21 (MAAPGARRPLLLLLLAGLAHS) is a signal peptide. The first lumenal domain stretch occupies residues 22-189 (APALFEVKDN…SKEETRCPQD (168 aa)). Residues 22 to 371 (APALFEVKDN…VEECVQDGNN (350 aa)) are Lumenal-facing. N-linked (GlcNAc...) asparagine glycans are attached at residues Asn32, Asn59, Asn71, Asn79, Asn102, Asn116, Asn125, Asn145, Asn160, and Asn178. Residues Cys36 and Cys75 are joined by a disulfide bond. Cys150 and Cys186 are disulfide-bonded. The segment at 180 to 211 (SKEETRCPQDQPSPTTGPPSPSPPLVPTNPSV) is disordered. The hinge stretch occupies residues 190–219 (QPSPTTGPPSPSPPLVPTNPSVSKYNVTGD). The segment covering 194-206 (TTGPPSPSPPLVP) has biased composition (pro residues). 8 N-linked (GlcNAc...) asparagine glycosylation sites follow: Asn215, Asn220, Asn233, Asn241, Asn271, Asn283, Asn297, and Asn312. The segment at 220 to 371 (NGTCLLASMA…VEECVQDGNN (152 aa)) is second lumenal domain. The cysteines at positions 223 and 260 are disulfide-linked. Residues Cys328 and Cys365 are joined by a disulfide bond. A helical membrane pass occupies residues 372–395 (MLIPIAVGGALAGLVLIVLIAYLI). Topologically, residues 396–407 (GRKRSHAGYQTI) are cytoplasmic.

Belongs to the LAMP family. Interacts with ABCB9; this interaction strongly stabilizes ABCB9 and protects ABCB9 against lysosomal degradation. Interacts with FURIN. Interacts with TMEM175; inhibiting the proton channel activity of TMEM175. O- and N-glycosylated; some of the N-glycans attached to LAMP-1 are polylactosaminoglycans.

It is found in the lysosome membrane. The protein resides in the endosome membrane. The protein localises to the late endosome membrane. Its subcellular location is the cell membrane. It localises to the cytolytic granule membrane. In terms of biological role, lysosomal membrane glycoprotein which plays an important role in lysosome biogenesis, lysosomal pH regulation, autophagy and cholesterol homeostasis. Acts as an important regulator of lysosomal lumen pH regulation by acting as a direct inhibitor of the proton channel TMEM175, facilitating lysosomal acidification for optimal hydrolase activity. Also plays an important role in NK-cells cytotoxicity. Mechanistically, participates in cytotoxic granule movement to the cell surface and perforin trafficking to the lytic granule. In addition, protects NK-cells from degranulation-associated damage induced by their own cytotoxic granule content. Presents carbohydrate ligands to selectins. This is Lysosome-associated membrane glycoprotein 1 (Lamp1) from Rattus norvegicus (Rat).